Here is a 133-residue protein sequence, read N- to C-terminus: Small ribosomal subunit protein eS17 (133 aa).

Belongs to the eukaryotic ribosomal protein eS17 family.

This Spodoptera frugiperda (Fall armyworm) protein is Small ribosomal subunit protein eS17 (RpS17).